Reading from the N-terminus, the 203-residue chain is Large ribosomal subunit protein uL3 (203 aa).

It belongs to the universal ribosomal protein uL3 family. Part of the 50S ribosomal subunit. Forms a cluster with proteins L14 and L19.

One of the primary rRNA binding proteins, it binds directly near the 3'-end of the 23S rRNA, where it nucleates assembly of the 50S subunit. The polypeptide is Large ribosomal subunit protein uL3 (Christiangramia forsetii (strain DSM 17595 / CGMCC 1.15422 / KT0803) (Gramella forsetii)).